A 270-amino-acid chain; its full sequence is Putative phosphoenolpyruvate synthase regulatory protein (270 aa).

ADP is bound at residue 154–161 (GVSRAGKT).

The protein belongs to the pyruvate, phosphate/water dikinase regulatory protein family. PSRP subfamily.

It carries out the reaction [pyruvate, water dikinase] + ADP = [pyruvate, water dikinase]-phosphate + AMP + H(+). The enzyme catalyses [pyruvate, water dikinase]-phosphate + phosphate + H(+) = [pyruvate, water dikinase] + diphosphate. Functionally, bifunctional serine/threonine kinase and phosphorylase involved in the regulation of the phosphoenolpyruvate synthase (PEPS) by catalyzing its phosphorylation/dephosphorylation. The chain is Putative phosphoenolpyruvate synthase regulatory protein from Deinococcus geothermalis (strain DSM 11300 / CIP 105573 / AG-3a).